Consider the following 80-residue polypeptide: Anaphase-promoting complex subunit hcn1 (80 aa).

Residue M1 is modified to N-acetylmethionine. The interval Q26–I54 is disordered. Residues A37–I54 show a composition bias toward basic and acidic residues.

As to quaternary structure, the APC/C is composed of at least 13 subunits: apc1, apc2, nuc2, apc4, apc5, cut9, apc8, apc10, apc11, hcn1, apc13, apc14 and apc15. Interacts directly (via N-terminus) with cut9.

Functionally, component of the anaphase promoting complex/cyclosome (APC/C), a cell cycle-regulated E3 ubiquitin-protein ligase complex that controls progression through mitosis and the G1 phase of the cell cycle. The APC/C is thought to confer substrate specificity and, in the presence of ubiquitin-conjugating E2 enzymes, it catalyzes the formation of protein-ubiquitin conjugates that are subsequently degraded by the 26S proteasome. Has a role in assembling cut9 in the 20S APC/cyclosome. This Schizosaccharomyces pombe (strain 972 / ATCC 24843) (Fission yeast) protein is Anaphase-promoting complex subunit hcn1 (hcn1).